A 245-amino-acid polypeptide reads, in one-letter code: Ribosomal RNA large subunit methyltransferase E (245 aa).

A disordered region spans residues 1-25; sequence MTKSPIGGNRSGRKLGQKVKKGKLK. The span at 11-25 shows a compositional bias: basic residues; it reads SGRKLGQKVKKGKLK. S-adenosyl-L-methionine is bound by residues Gly81, Trp83, Asp104, Asp120, and Asp144. Lys184 serves as the catalytic Proton acceptor.

This sequence belongs to the class I-like SAM-binding methyltransferase superfamily. RNA methyltransferase RlmE family.

It is found in the cytoplasm. The enzyme catalyses uridine(2552) in 23S rRNA + S-adenosyl-L-methionine = 2'-O-methyluridine(2552) in 23S rRNA + S-adenosyl-L-homocysteine + H(+). Specifically methylates the uridine in position 2552 of 23S rRNA at the 2'-O position of the ribose in the fully assembled 50S ribosomal subunit. In Rhizobium meliloti (strain 1021) (Ensifer meliloti), this protein is Ribosomal RNA large subunit methyltransferase E.